A 554-amino-acid polypeptide reads, in one-letter code: Asparagine--tRNA ligase, cytoplasmic (554 aa).

Belongs to the class-II aminoacyl-tRNA synthetase family.

The protein localises to the cytoplasm. Its subcellular location is the cytosol. The enzyme catalyses tRNA(Asn) + L-asparagine + ATP = L-asparaginyl-tRNA(Asn) + AMP + diphosphate + H(+). Catalyzes the attachment of asparagine to tRNA(Asn) in a two-step reaction: asparagine is first activated by ATP to form Asn-AMP and then transferred to the acceptor end of tRNA(Asn). This chain is Asparagine--tRNA ligase, cytoplasmic, found in Saccharomyces cerevisiae (strain ATCC 204508 / S288c) (Baker's yeast).